Here is a 318-residue protein sequence, read N- to C-terminus: Glutathione synthetase (318 aa).

Residues 124–310 (EKLFTAWFPE…ITGKLMDAIE (187 aa)) enclose the ATP-grasp domain. Position 150–207 (150–207 (FREQHGDVILKPLDGMGGASIFRVKEGDPNLSVIIETLTNHGQNYCMAQTFVPDISNG)) interacts with ATP. Residues Glu281 and Asn283 each coordinate Mg(2+).

The protein belongs to the prokaryotic GSH synthase family. The cofactor is Mg(2+). It depends on Mn(2+) as a cofactor.

It carries out the reaction gamma-L-glutamyl-L-cysteine + glycine + ATP = glutathione + ADP + phosphate + H(+). The protein operates within sulfur metabolism; glutathione biosynthesis; glutathione from L-cysteine and L-glutamate: step 2/2. The sequence is that of Glutathione synthetase from Vibrio cholerae serotype O1 (strain ATCC 39315 / El Tor Inaba N16961).